The sequence spans 911 residues: Anoctamin-6 (911 aa).

Residues 1-301 (MQMMTRKVLL…YGEKIGIYFA (301 aa)) are Cytoplasmic-facing. The chain crosses the membrane as a helical span at residues 302-322 (WLGYYTQMLLLAAVVGVACFL). The Extracellular portion of the chain corresponds to 323–376 (YGYLDQDNCTWSKEVCDPDIGGQILMCPQCDRLCPFWRLNITCESSKKLCIFDS). A glycan (N-linked (GlcNAc...) asparagine) is linked at asparagine 330. Cystine bridges form between cysteine 331–cysteine 372, cysteine 338–cysteine 365, cysteine 349–cysteine 807, cysteine 352–cysteine 356, and cysteine 596–cysteine 601. N-linked (GlcNAc...) asparagine glycosylation is present at asparagine 362. A helical transmembrane segment spans residues 377-397 (FGTLIFAVFMGVWVTLFLEFW). Residues 398–456 (KRRQAELEYEWDTVELQQEEQARPEYEAQCNHVVINEITQEEERIPFTTCGKCIRVTLC) lie on the Cytoplasmic side of the membrane. A helical membrane pass occupies residues 457–477 (ASAVFFWILLIIASVIGIIVY). Residues 478 to 510 (RLSVFIVFSTTLPKNPNGTDPIQKYLTPQMATS) are Extracellular-facing. An N-linked (GlcNAc...) asparagine glycan is attached at asparagine 494. A helical transmembrane segment spans residues 511-531 (ITASIISFIIIMILNTIYEKV). Residues 532–552 (AIMITNFELPRTQTDYENSLT) lie on the Cytoplasmic side of the membrane. The helical transmembrane segment at 553–573 (MKMFLFQFVNYYSSCFYIAFF) threads the bilayer. Over 574–602 (KGKFVGYPGDPVYLLGKYRSEECDPGGCL) the chain is Extracellular. A helical membrane pass occupies residues 603–622 (LELTTQLTIIMGGKAIWNNI). Over 623-664 (QEVLLPWVMNLIGRYKRVSGSEKITPRWEQDYHLQPMGKLGL) the chain is Cytoplasmic. Ca(2+)-binding residues include glutamate 624, glutamate 667, and glutamate 670. Transmembrane regions (helical) follow at residues 665–685 (FYEY…VASF) and 686–706 (PLAP…DAWK). The Cytoplasmic segment spans residues 707–723 (LTTQFRRMVPEKAQDIG). Residues 724 to 744 (AWQPIMQGIAILAVVTNAMII) traverse the membrane as a helical segment. At 745–837 (AFTSDMIPRL…YWHVIAAKLA (93 aa)) the chain is on the extracellular side. 3 N-linked (GlcNAc...) asparagine glycosylation sites follow: asparagine 778, asparagine 785, and asparagine 803. A helical membrane pass occupies residues 838–858 (FIIVMEHIIYSVKFFISYAIP). The Cytoplasmic portion of the chain corresponds to 859 to 911 (DVSKITKSKIKREKYLTQKLLHESHLKDLTKNMGIIAERIGGTVDNSVRPKLE).

The protein belongs to the anoctamin family. Homodimer. Predominant expression seen in epithelial tissues. Also found in skeletal system where it is primarily expressed in osteoblasts.

It localises to the cell membrane. The catalysed reaction is a 1,2-diacyl-sn-glycero-3-phospho-L-serine(in) = a 1,2-diacyl-sn-glycero-3-phospho-L-serine(out). It carries out the reaction a beta-D-galactosyl-(1&lt;-&gt;1')-N-acylsphing-4-enine(out) = a beta-D-galactosyl-(1&lt;-&gt;1')-N-acylsphing-4-enine(in). It catalyses the reaction a 1,2-diacyl-sn-glycero-3-phosphocholine(in) = a 1,2-diacyl-sn-glycero-3-phosphocholine(out). With respect to regulation, exhibits synergistic gating by Ca(2+) and voltage. Inhibited by some non-specific cation channel blockers such as: ruthenium red, 2-aminoethyl diphenylborinate (2APB), gadolinium and cadmium ions. Small-conductance calcium-activated nonselective cation (SCAN) channel which acts as a regulator of phospholipid scrambling in platelets, osteoblasts and fetal thymocytes. Phospholipid scrambling results in surface exposure of phosphatidylserine which in platelets is essential to trigger the clotting system whereas in osteoblasts is essential for the deposition of hydroxyapatite during bone mineralization. Has calcium-dependent phospholipid scramblase activity; scrambles phosphatidylserine, phosphatidylcholine and galactosylceramide. Can generate outwardly rectifying chloride channel currents in airway epithelial cells and Jurkat T lymphocytes. This chain is Anoctamin-6 (Ano6), found in Mus musculus (Mouse).